The chain runs to 407 residues: Substance-P receptor (407 aa).

Over 1-31 (MDNVLPVDSDLSPNISTNTSEPNQFVQPAWQ) the chain is Extracellular. N-linked (GlcNAc...) asparagine glycosylation is found at asparagine 14 and asparagine 18. A helical membrane pass occupies residues 32 to 54 (IVLWAAAYTVIVVTSVVGNVVVM). The Cytoplasmic portion of the chain corresponds to 55–64 (WIILAHKRMR). Residues 65–86 (TVTNYFLVNLAFAEASMAAFNT) traverse the membrane as a helical segment. At 87 to 106 (VVNFTYAVHNEWYYGLFYCK) the chain is on the extracellular side. The cysteines at positions 105 and 180 are disulfide-linked. The helical transmembrane segment at 107–128 (FHNFFPIAAVFASIYSMTAVAF) threads the bilayer. The Cytoplasmic segment spans residues 129-148 (DRYMAIIHPLQPRLSATATK). A helical membrane pass occupies residues 149–169 (VVICVIWVLALLLAFPQGYYS). At 170–194 (TTETMPSRVVCMIEWPEHPNKIYEK) the chain is on the extracellular side. A helical transmembrane segment spans residues 195–219 (VYHICVTVLIYFLPLLVIGYAYTVV). Histidine 197 is a CP-96345 binding site. Topologically, residues 220–248 (GITLWASEIPGDSSDRYHEQVSAKRKVVK) are cytoplasmic. Residues 249-270 (MMIVVVCTFAICWLPFHIFFLL) traverse the membrane as a helical segment. Topologically, residues 271 to 283 (PYINPDLYLKKFI) are extracellular. A helical membrane pass occupies residues 284 to 308 (QQVYLAIMWLAMSSTMYNPIIYCCL). Residues 309–407 (NDRFRLGFKH…SFSFSSNVLS (99 aa)) lie on the Cytoplasmic side of the membrane. Cysteine 322 is lipidated: S-palmitoyl cysteine. The tract at residues 364–407 (AHEEEPEDGPKATPSSLDLTSNCSSRSDSKTMTESFSFSSNVLS) is disordered. A compositionally biased stretch (polar residues) spans 376–407 (TPSSLDLTSNCSSRSDSKTMTESFSFSSNVLS).

It belongs to the G-protein coupled receptor 1 family. In terms of assembly, interacts with ARRB1.

It localises to the cell membrane. This is a receptor for the tachykinin neuropeptide substance P. It is probably associated with G proteins that activate a phosphatidylinositol-calcium second messenger system. The rank order of affinity of this receptor to tachykinins is: substance P &gt; substance K &gt; neuromedin-K. This chain is Substance-P receptor (TACR1), found in Homo sapiens (Human).